We begin with the raw amino-acid sequence, 244 residues long: 3-oxoacyl-[acyl-carrier-protein] reductase FabG (244 aa).

Residues 12–15 (GASR) and Thr37 each bind NADP(+). Ca(2+) is bound by residues Gly50 and Gly53. Residues 59 to 60 (NV) and Asn86 contribute to the NADP(+) site. Residue Ser138 participates in substrate binding. A Ca(2+)-binding site is contributed by Asn145. Tyr151 acts as the Proton acceptor in catalysis. NADP(+)-binding positions include 151-155 (YAAAK) and Ile184. The Ca(2+) site is built by Glu233 and Thr234.

The protein belongs to the short-chain dehydrogenases/reductases (SDR) family. As to quaternary structure, homotetramer.

The enzyme catalyses a (3R)-hydroxyacyl-[ACP] + NADP(+) = a 3-oxoacyl-[ACP] + NADPH + H(+). It catalyses the reaction 3-oxobutanoyl-[ACP] + NADPH + H(+) = (3R)-hydroxybutanoyl-[ACP] + NADP(+). It carries out the reaction 3-oxopentanoyl-[ACP] + NADPH + H(+) = (3R)-hydroxypentanoyl-[ACP] + NADP(+). The catalysed reaction is 3-oxohexanoyl-[ACP] + NADPH + H(+) = (3R)-hydroxyhexanoyl-[ACP] + NADP(+). The enzyme catalyses 3-oxoheptanoyl-[ACP] + NADPH + H(+) = (3R)-hydroxyheptanoyl-[ACP] + NADP(+). It catalyses the reaction 3-oxooctanoyl-[ACP] + NADPH + H(+) = (3R)-hydroxyoctanoyl-[ACP] + NADP(+). It carries out the reaction 3-oxononanoyl-[ACP] + NADPH + H(+) = (3R)-hydroxynonanoyl-[ACP] + NADP(+). The catalysed reaction is 3-oxodecanoyl-[ACP] + NADPH + H(+) = (3R)-hydroxydecanoyl-[ACP] + NADP(+). The enzyme catalyses 3-oxohexadecanoyl-[ACP] + NADPH + H(+) = (3R)-hydroxyhexadecanoyl-[ACP] + NADP(+). It catalyses the reaction 3-oxo-(9Z)-hexadecenoyl-[ACP] + NADPH + H(+) = (3R)-hydroxy-(9Z)-hexadecenoyl-[ACP] + NADP(+). It carries out the reaction 4-methyl-3-oxopentanoyl-[ACP] + NADPH + H(+) = (3R)-hydroxy-4-methylpentanoyl-[ACP] + NADP(+). The catalysed reaction is 5-methyl-3-oxohexanoyl-[ACP] + NADPH + H(+) = (3R)-hydroxy-5-methylhexanoyl-[ACP] + NADP(+). The enzyme catalyses 4-methyl-3-oxohexanoyl-[ACP] + NADPH + H(+) = (3R)-hydroxy-4-methylhexanoyl-[ACP] + NADP(+). The protein operates within lipid metabolism; fatty acid biosynthesis. Its activity is regulated as follows. Inhibited by cinnamic acid derivatives. In terms of biological role, catalyzes the NADPH-dependent reduction of beta-ketoacyl-ACP substrates to beta-hydroxyacyl-ACP products, the first reductive step in the elongation cycle of fatty acid biosynthesis. The protein is 3-oxoacyl-[acyl-carrier-protein] reductase FabG (fabG) of Escherichia coli (strain K12).